The primary structure comprises 772 residues: MSLFNKVTKSFQWGDKTVVMETGEIARQASGAVVVDIDGTVILATVVASKTAKPGQDFFPLTVDYIEKTYAAGKIPGSFFKREAKPSEHETLTSRLIDRPIRPLFPEGFLNEVHVVIHTLSLNPEVDADIAAMIGVSAALSISGIPFSGPIGAARVGYINGQYVLNPGQTARKDSQMDLVVAGTEAAVLMVESEAQQLSEEIMLGGVVFGHEQANIAINAIHELVRDAGKPVWDWQAPAEDEAFVAKVKSLAEEKLRAVYQIRSKQARTQALREANASVMNTLKESGEPFDAGKVNDLLFAIESKIVRSQILSGEPRIDGRDTRTVRPIEIRNSVLPRTHGSALFTRGETQGLVVTTLGTERDAQRIDALAGEYEDRFLFHYNMPPFATGEVGRMGSTKRREIGHGRLAKRALVAVLPTKEEFPYTIRVVSEITESNGSSSMASVCGGCLSMMDAGVPMKAHVAGIAMGLIKEDNRFAVLTDILGDEDHLGDMDFKVAGTTNGITALQMDIKIQGITKEIMQVALAQAKEARMHILGKMQEAMGEAKTEVSQFAPRLTTLKINPEKIRDVIGKGGAVIRGLQEETGTTINIDEDGTITIASTDPEKAEFAKKRIEQITAEVEIGKVYEGPVTKILDFGALINLLPGKDGLLHISQIAHERVEKVTDYLSEGQIVKVKVLETDEKGRVKLSMKALTERPAGMEYSERPPREDRGDRGDRGGERRERSDRGDRGGDRGERAPRFNSEQQQQPRSNEQQPAPVGEQPYAPRDSQE.

Positions 488 and 494 each coordinate Mg(2+). The KH domain maps to 555–614 (PRLTTLKINPEKIRDVIGKGGAVIRGLQEETGTTINIDEDGTITIASTDPEKAEFAKKRI). The S1 motif domain maps to 624 to 692 (GKVYEGPVTK…EKGRVKLSMK (69 aa)). Residues 690-772 (SMKALTERPA…QPYAPRDSQE (83 aa)) are disordered. Residues 703 to 740 (YSERPPREDRGDRGDRGGERRERSDRGDRGGDRGERAP) are compositionally biased toward basic and acidic residues. A compositionally biased stretch (low complexity) spans 743 to 757 (NSEQQQQPRSNEQQP).

It belongs to the polyribonucleotide nucleotidyltransferase family. Requires Mg(2+) as cofactor.

The protein localises to the cytoplasm. It carries out the reaction RNA(n+1) + phosphate = RNA(n) + a ribonucleoside 5'-diphosphate. Functionally, involved in mRNA degradation. Catalyzes the phosphorolysis of single-stranded polyribonucleotides processively in the 3'- to 5'-direction. The sequence is that of Polyribonucleotide nucleotidyltransferase from Variovorax paradoxus (strain S110).